The following is a 171-amino-acid chain: Regulator of ribonuclease activity A (171 aa).

This sequence belongs to the RraA family. As to quaternary structure, homotrimer. Binds to both RNA-binding sites in the C-terminal region of Rne and to RhlB.

The protein localises to the cytoplasm. Functionally, globally modulates RNA abundance by binding to RNase E (Rne) and regulating its endonucleolytic activity. Can modulate Rne action in a substrate-dependent manner by altering the composition of the degradosome. Modulates RNA-binding and helicase activities of the degradosome. This is Regulator of ribonuclease activity A from Vibrio cholerae serotype O1 (strain ATCC 39315 / El Tor Inaba N16961).